A 127-amino-acid chain; its full sequence is MARVKRAVNAHKKRRAILEAASGYRGQRSRLYRKAKEQVTHSLVYNYNDRKKRKGDFRQLWIQRINAAARQNGMTYNRLIQGLKAANIEVDRKILAELAVNDANAFAALVEVAQKALPSDVNAPKAA.

It belongs to the bacterial ribosomal protein bL20 family.

In terms of biological role, binds directly to 23S ribosomal RNA and is necessary for the in vitro assembly process of the 50S ribosomal subunit. It is not involved in the protein synthesizing functions of that subunit. The protein is Large ribosomal subunit protein bL20 of Streptomyces griseus subsp. griseus (strain JCM 4626 / CBS 651.72 / NBRC 13350 / KCC S-0626 / ISP 5235).